The sequence spans 124 residues: ATP synthase epsilon chain (124 aa).

This sequence belongs to the ATPase epsilon chain family. F-type ATPases have 2 components, CF(1) - the catalytic core - and CF(0) - the membrane proton channel. CF(1) has five subunits: alpha(3), beta(3), gamma(1), delta(1), epsilon(1). CF(0) has three main subunits: a, b and c.

The protein resides in the cell membrane. Functionally, produces ATP from ADP in the presence of a proton gradient across the membrane. In Corynebacterium efficiens (strain DSM 44549 / YS-314 / AJ 12310 / JCM 11189 / NBRC 100395), this protein is ATP synthase epsilon chain.